The chain runs to 256 residues: Thiazole synthase (256 aa).

Lys95 acts as the Schiff-base intermediate with DXP in catalysis. Residues Gly156, 182 to 183, and 204 to 205 each bind 1-deoxy-D-xylulose 5-phosphate; these read AG and NT.

Belongs to the ThiG family. Homotetramer. Forms heterodimers with either ThiH or ThiS.

It is found in the cytoplasm. It carries out the reaction [ThiS sulfur-carrier protein]-C-terminal-Gly-aminoethanethioate + 2-iminoacetate + 1-deoxy-D-xylulose 5-phosphate = [ThiS sulfur-carrier protein]-C-terminal Gly-Gly + 2-[(2R,5Z)-2-carboxy-4-methylthiazol-5(2H)-ylidene]ethyl phosphate + 2 H2O + H(+). Its pathway is cofactor biosynthesis; thiamine diphosphate biosynthesis. Its function is as follows. Catalyzes the rearrangement of 1-deoxy-D-xylulose 5-phosphate (DXP) to produce the thiazole phosphate moiety of thiamine. Sulfur is provided by the thiocarboxylate moiety of the carrier protein ThiS. In vitro, sulfur can be provided by H(2)S. The protein is Thiazole synthase of Salmonella schwarzengrund (strain CVM19633).